The sequence spans 383 residues: UDP-N-acetylglucosamine--N-acetylmuramyl-(pentapeptide) pyrophosphoryl-undecaprenol N-acetylglucosamine transferase (383 aa).

Residues 10–12 (TGG), Asn124, Arg165, Ser190, Ile245, and Gln290 each bind UDP-N-acetyl-alpha-D-glucosamine. The tract at residues 364-383 (PFGQAREPGQKPARPPDLAS) is disordered.

The protein belongs to the glycosyltransferase 28 family. MurG subfamily.

It localises to the cell inner membrane. The enzyme catalyses di-trans,octa-cis-undecaprenyl diphospho-N-acetyl-alpha-D-muramoyl-L-alanyl-D-glutamyl-meso-2,6-diaminopimeloyl-D-alanyl-D-alanine + UDP-N-acetyl-alpha-D-glucosamine = di-trans,octa-cis-undecaprenyl diphospho-[N-acetyl-alpha-D-glucosaminyl-(1-&gt;4)]-N-acetyl-alpha-D-muramoyl-L-alanyl-D-glutamyl-meso-2,6-diaminopimeloyl-D-alanyl-D-alanine + UDP + H(+). It participates in cell wall biogenesis; peptidoglycan biosynthesis. Functionally, cell wall formation. Catalyzes the transfer of a GlcNAc subunit on undecaprenyl-pyrophosphoryl-MurNAc-pentapeptide (lipid intermediate I) to form undecaprenyl-pyrophosphoryl-MurNAc-(pentapeptide)GlcNAc (lipid intermediate II). The sequence is that of UDP-N-acetylglucosamine--N-acetylmuramyl-(pentapeptide) pyrophosphoryl-undecaprenol N-acetylglucosamine transferase from Anaeromyxobacter sp. (strain K).